A 147-amino-acid polypeptide reads, in one-letter code: UPF0306 protein KPK_0562 (147 aa).

Belongs to the UPF0306 family.

The protein is UPF0306 protein KPK_0562 of Klebsiella pneumoniae (strain 342).